A 557-amino-acid chain; its full sequence is Dicarboxylate transporter 1, chloroplastic (557 aa).

The N-terminal 69 residues, 1–69 (MASLALSGSC…STLVKASSTV (69 aa)), are a transit peptide targeting the chloroplast. 12 helical membrane passes run 90-110 (AAIK…FVPV), 122-142 (LAIF…LGAV), 158-178 (FAAA…LAFF), 229-249 (AGGI…SNVG), 256-276 (LGSW…SMFL), 305-325 (AAIV…YLIY), 355-375 (IMAA…KLGV), 376-396 (DAVT…VVTW), 411-431 (WFAA…IEWF), 438-458 (FVGG…LLYF), 477-497 (AFLS…LVLA), and 531-551 (YGFL…GAWW).

Belongs to the SLC13A/DASS transporter (TC 2.A.47) family. DIT1 subfamily. As to expression, expressed in roots, rosette and cauline leaves, stems, flowers and siliques.

The protein localises to the plastid. It localises to the chloroplast inner membrane. In terms of biological role, 2-oxoglutarate/malate translocator involved with DIT2-1 in primary ammonia assimilation and in the re-assimilation of ammonia generated by the photorespiratory pathway. Imports 2-oxoglutarate into plastids as precursor for ammonia assimilation. 2-oxoglutarate is converted to glutamate, the end product of ammonia assimilation, which is exported to the cytosol by DIT2-1. The protein is Dicarboxylate transporter 1, chloroplastic (DIT1) of Arabidopsis thaliana (Mouse-ear cress).